A 102-amino-acid polypeptide reads, in one-letter code: Putative RNA-binding protein RbpA (102 aa).

Residues 2-79 (SIYVGNLSYE…RDLKVNKAKP (78 aa)) enclose the RRM domain. Positions 73–84 (KVNKAKPREDRG) are enriched in basic and acidic residues. Residues 73 to 102 (KVNKAKPREDRGPSGGNRGGYGGGGGRNRY) form a disordered region. Residues 85-102 (PSGGNRGGYGGGGGRNRY) are compositionally biased toward gly residues.

The protein is Putative RNA-binding protein RbpA (rbpA) of Nostoc sp. (strain PCC 7120 / SAG 25.82 / UTEX 2576).